The sequence spans 602 residues: Raftlin (602 aa).

The N-myristoyl glycine moiety is linked to residue glycine 2. A lipid anchor (S-palmitoyl cysteine) is attached at cysteine 3. The segment covering 178-195 (TPASNNSVQSRDNKNVSN) has biased composition (polar residues). Disordered stretches follow at residues 178–282 (TPAS…RCSK), 451–495 (KKES…EVTE), and 524–567 (NETA…QSAP). Basic and acidic residues-rich tracts occupy residues 197–209 (PEDH…EKID) and 244–265 (PDCK…REAP). The segment covering 468–477 (KPMKKSRKTK) has biased composition (basic residues).

It belongs to the raftlin family.

The protein resides in the cell membrane. Functionally, may play a pivotal role in the formation and/or maintenance of lipid rafts. May regulate B-cell antigen receptor-mediated signaling. The protein is Raftlin (RFTN1) of Gallus gallus (Chicken).